A 276-amino-acid polypeptide reads, in one-letter code: Rhomboid protease GlpG (276 aa).

6 helical membrane-spanning segments follow: residues 94 to 114, 142 to 162, 169 to 189, 192 to 212, 229 to 249, and 250 to 270; these read GPVTWVMMIACVVVFIAMQIL, ALMHFSLMHILFNLLWWWYLG, LGSGKLIVITLISALLSGYVQ, FSGPWFGGLSGVVYALMGYVW, LIIFALIWIVAGWFDLFGMSM, and ANGAHIAGLAVGLAMAFVDSL. Residue S201 is the Nucleophile of the active site. The active site involves H254.

This sequence belongs to the peptidase S54 family.

The protein localises to the cell inner membrane. It carries out the reaction Cleaves type-1 transmembrane domains using a catalytic dyad composed of serine and histidine that are contributed by different transmembrane domains.. Its function is as follows. Rhomboid-type serine protease that catalyzes intramembrane proteolysis. The chain is Rhomboid protease GlpG from Escherichia fergusonii (strain ATCC 35469 / DSM 13698 / CCUG 18766 / IAM 14443 / JCM 21226 / LMG 7866 / NBRC 102419 / NCTC 12128 / CDC 0568-73).